A 461-amino-acid chain; its full sequence is Argininosuccinate lyase (461 aa).

It belongs to the lyase 1 family. Argininosuccinate lyase subfamily.

It localises to the cytoplasm. It carries out the reaction 2-(N(omega)-L-arginino)succinate = fumarate + L-arginine. It participates in amino-acid biosynthesis; L-arginine biosynthesis; L-arginine from L-ornithine and carbamoyl phosphate: step 3/3. In Nitrosomonas eutropha (strain DSM 101675 / C91 / Nm57), this protein is Argininosuccinate lyase.